We begin with the raw amino-acid sequence, 623 residues long: Myosin light chain kinase 2, skeletal/cardiac muscle (623 aa).

Disordered regions lie at residues 1–179 and 204–251; these read MATE…PSCP and GVPV…QGDT. The residue at position 2 (A2) is an N-acetylalanine. The segment covering 20–31 has biased composition (low complexity); the sequence is APKAAAGEGPPA. Composition is skewed to basic and acidic residues over residues 32 to 43 and 49 to 89; these read AEKDPGPPDPQK and DPEK…EKGD. The span at 90 to 102 shows a compositional bias: low complexity; sequence GASAQPSASSQGP. A compositionally biased stretch (basic and acidic residues) spans 150–159; the sequence is GEAKEQKKVA. A phosphoserine mark is found at S169, S175, and S177. A compositionally biased stretch (low complexity) spans 204 to 214; that stretch reads GVPVTPGPTET. Positions 215–224 are enriched in basic and acidic residues; that stretch reads EPAKVAEGEK. Residues 312-567 enclose the Protein kinase domain; sequence LNSKEALGGG…AAQCLAHPWL (256 aa). ATP is bound by residues 318–326 and K341; that span reads LGGGKFGAV. D433 acts as the Proton acceptor in catalysis. Residue T472 is modified to Phosphothreonine. Positions 601–613 are calmodulin-binding; the sequence is IAVSAANRFKKIS.

The protein belongs to the protein kinase superfamily. CAMK Ser/Thr protein kinase family. As to quaternary structure, may interact with centrin.

It is found in the cytoplasm. It catalyses the reaction L-seryl-[myosin light chain] + ATP = O-phospho-L-seryl-[myosin light chain] + ADP + H(+). The enzyme catalyses L-threonyl-[myosin light chain] + ATP = O-phospho-L-threonyl-[myosin light chain] + ADP + H(+). Its function is as follows. Implicated in the level of global muscle contraction and cardiac function. Phosphorylates a specific serine in the N-terminus of a myosin light chain. The polypeptide is Myosin light chain kinase 2, skeletal/cardiac muscle (MYLK2) (Bos taurus (Bovine)).